Consider the following 418-residue polypeptide: AP-3 complex subunit mu-2 (418 aa).

Residues 176–417 (NNEAYFDVVE…MTKAGKFQVR (242 aa)) enclose the MHD domain.

This sequence belongs to the adaptor complexes medium subunit family. In terms of assembly, adaptor protein complex 3 (AP-3) is a heterotetramer composed of two large adaptins (delta-type subunit AP3D1 and beta-type subunit AP3B1 or AP3B2), a medium adaptin (mu-type subunit AP3M1 or AP3M2) and a small adaptin (sigma-type subunit APS1 or AP3S2). AP-3 associates with the BLOC-1 complex.

It is found in the golgi apparatus. Its subcellular location is the cytoplasmic vesicle membrane. In terms of biological role, component of the adaptor complexes which link clathrin to receptors in coated vesicles. Clathrin-associated protein complexes are believed to interact with the cytoplasmic tails of membrane proteins, leading to their selection and concentration. Ap47 is a subunit of the plasma membrane adaptor. In concert with the BLOC-1 complex, AP-3 is required to target cargos into vesicles assembled at cell bodies for delivery into neurites and nerve terminals. The chain is AP-3 complex subunit mu-2 (Ap3m2) from Rattus norvegicus (Rat).